The primary structure comprises 622 residues: Low affinity potassium transport system protein Kup (622 aa).

The next 12 membrane-spanning stretches (helical) occupy residues 9–29, 49–69, 103–123, 137–157, 165–185, 213–233, 247–267, 276–296, 337–357, 363–383, 396–416, and 419–439; these read LPAI…TSPL, VFGF…IKYL, VIMG…TPAI, PQLD…LFMI, VGKL…GLGL, VSFI…ALYA, WFTV…ALLL, PFFL…AALA, IYIP…IVSF, LAAA…ILST, FVAL…TANL, and LLSG…VMTT.

It belongs to the HAK/KUP transporter (TC 2.A.72) family.

It is found in the cell inner membrane. It catalyses the reaction K(+)(in) + H(+)(in) = K(+)(out) + H(+)(out). In terms of biological role, responsible for the low-affinity transport of potassium into the cell. Likely operates as a K(+):H(+) symporter. The sequence is that of Low affinity potassium transport system protein Kup from Escherichia coli (strain K12 / MC4100 / BW2952).